The sequence spans 385 residues: S-adenosylmethionine synthase (385 aa).

Histidine 16 lines the ATP pocket. Position 18 (aspartate 18) interacts with Mg(2+). K(+) is bound at residue glutamate 44. Residues glutamate 57 and glutamine 100 each contribute to the L-methionine site. The segment at 100–110 (QSPDINQGVDR) is flexible loop. Residues 164–166 (DGK), 230–231 (KF), aspartate 239, 245–246 (RK), alanine 262, and lysine 266 each bind ATP. An L-methionine-binding site is contributed by aspartate 239. Residue lysine 270 participates in L-methionine binding.

This sequence belongs to the AdoMet synthase family. Homotetramer; dimer of dimers. It depends on Mg(2+) as a cofactor. The cofactor is K(+).

The protein localises to the cytoplasm. The catalysed reaction is L-methionine + ATP + H2O = S-adenosyl-L-methionine + phosphate + diphosphate. It participates in amino-acid biosynthesis; S-adenosyl-L-methionine biosynthesis; S-adenosyl-L-methionine from L-methionine: step 1/1. Its function is as follows. Catalyzes the formation of S-adenosylmethionine (AdoMet) from methionine and ATP. The overall synthetic reaction is composed of two sequential steps, AdoMet formation and the subsequent tripolyphosphate hydrolysis which occurs prior to release of AdoMet from the enzyme. The protein is S-adenosylmethionine synthase of Helicobacter acinonychis (strain Sheeba).